Here is a 355-residue protein sequence, read N- to C-terminus: Green-sensitive opsin-1 (355 aa).

At 1–49 (MAAHADEPVFAARRYNEETTRESAFVYTNANNTRDPFEGPNYHIAPRWV) the chain is on the extracellular side. N-linked (GlcNAc...) asparagine glycosylation is present at Asn31. Residues 50-74 (YNLASLWMIIVVIASIFTNSLVIVA) traverse the membrane as a helical segment. The Cytoplasmic segment spans residues 75–86 (TAKFKKLRHPLN). The helical transmembrane segment at 87 to 112 (WILVNLAIADLGETVLASTISVFNQV) threads the bilayer. Residues 113 to 126 (FGYFVLGHPMCIFE) are Extracellular-facing. A disulfide bond links Cys123 and Cys200. Residues 127–146 (GWTVSVCGITALWSLTIISW) traverse the membrane as a helical segment. Topologically, residues 147–165 (ERWVVVCKPFGNVKFDGKW) are cytoplasmic. Residues 166-189 (AAGGIIFAWTWAIIWCTPPIFGWS) traverse the membrane as a helical segment. Topologically, residues 190–215 (RYWPHGLKTSCGPDVFSGSEDPGVAS) are extracellular. Residues 216 to 243 (YMVTLLLTCCILPLSVIIICYIFVWNAI) traverse the membrane as a helical segment. Residues 244-265 (HQVAQQQKDSESTQKAEKEVSR) lie on the Cytoplasmic side of the membrane. The helical transmembrane segment at 266–289 (MVVVMILAFILCWGPYASFATFSA) threads the bilayer. The Extracellular segment spans residues 290-297 (LNPGYAWH). The chain crosses the membrane as a helical span at residues 298 to 322 (PLAAALPAYFAKSATIYNPIIYVFM). Lys309 is subject to N6-(retinylidene)lysine. The Cytoplasmic portion of the chain corresponds to 323 to 355 (NRQFRSCIMQLFGKKVEDASEVSGSTTEVSTAS).

It belongs to the G-protein coupled receptor 1 family. Opsin subfamily. In terms of tissue distribution, the color pigments are found in the cone photoreceptor cells.

The protein localises to the membrane. Its function is as follows. Visual pigments are the light-absorbing molecules that mediate vision. They consist of an apoprotein, opsin, covalently linked to cis-retinal. The chain is Green-sensitive opsin-1 (G103) from Psalidodon fasciatus (Banded astyanax).